Reading from the N-terminus, the 155-residue chain is Ribonuclease H (155 aa).

Residues 1–142 enclose the RNase H type-1 domain; that stretch reads MLKQVEIFTD…CDELARAAAM (142 aa). Residues aspartate 10, glutamate 48, aspartate 70, and aspartate 134 each coordinate Mg(2+).

Belongs to the RNase H family. As to quaternary structure, monomer. Mg(2+) is required as a cofactor.

It localises to the cytoplasm. The enzyme catalyses Endonucleolytic cleavage to 5'-phosphomonoester.. Endonuclease that specifically degrades the RNA of RNA-DNA hybrids. The chain is Ribonuclease H from Salmonella paratyphi A (strain AKU_12601).